A 431-amino-acid polypeptide reads, in one-letter code: 3-phosphoshikimate 1-carboxyvinyltransferase (431 aa).

3-phosphoshikimate is bound by residues lysine 26, serine 27, and arginine 31. Lysine 26 serves as a coordination point for phosphoenolpyruvate. Residues glycine 99 and arginine 127 each contribute to the phosphoenolpyruvate site. 6 residues coordinate 3-phosphoshikimate: serine 170, serine 171, glutamine 172, serine 199, glutamate 314, and histidine 343. Glutamine 172 lines the phosphoenolpyruvate pocket. Catalysis depends on glutamate 314, which acts as the Proton acceptor. The phosphoenolpyruvate site is built by arginine 347, arginine 388, and lysine 413.

It belongs to the EPSP synthase family. Monomer.

The protein resides in the cytoplasm. The enzyme catalyses 3-phosphoshikimate + phosphoenolpyruvate = 5-O-(1-carboxyvinyl)-3-phosphoshikimate + phosphate. Its pathway is metabolic intermediate biosynthesis; chorismate biosynthesis; chorismate from D-erythrose 4-phosphate and phosphoenolpyruvate: step 6/7. Its function is as follows. Catalyzes the transfer of the enolpyruvyl moiety of phosphoenolpyruvate (PEP) to the 5-hydroxyl of shikimate-3-phosphate (S3P) to produce enolpyruvyl shikimate-3-phosphate and inorganic phosphate. The sequence is that of 3-phosphoshikimate 1-carboxyvinyltransferase from Mycobacterium marinum (strain ATCC BAA-535 / M).